The sequence spans 728 residues: Catalase-peroxidase 1 (728 aa).

Positions 91 to 218 (WHSAGTYRTA…LAAVQMGLIY (128 aa)) form a cross-link, tryptophyl-tyrosyl-methioninium (Trp-Tyr) (with M-244). The Proton acceptor role is filled by histidine 92. The segment at residues 218 to 244 (YVNPEGPDGNPDPVAAAHDIRETFARM) is a cross-link (tryptophyl-tyrosyl-methioninium (Tyr-Met) (with W-91)). Histidine 259 lines the heme b pocket.

Belongs to the peroxidase family. Peroxidase/catalase subfamily. Homodimer or homotetramer. It depends on heme b as a cofactor. Formation of the three residue Trp-Tyr-Met cross-link is important for the catalase, but not the peroxidase activity of the enzyme.

The catalysed reaction is H2O2 + AH2 = A + 2 H2O. It carries out the reaction 2 H2O2 = O2 + 2 H2O. Functionally, bifunctional enzyme with both catalase and broad-spectrum peroxidase activity. The polypeptide is Catalase-peroxidase 1 (Burkholderia orbicola (strain MC0-3)).